We begin with the raw amino-acid sequence, 91 residues long: MIDKVKSPLLTEKSIRLLQKNQYTFQVNSDVNKTEFKKWIEIFFKVKVMSINSCRPPRKKKRIGLISGYTVRYKKIIVTLKSGDSIPLFSI.

Belongs to the universal ribosomal protein uL23 family. As to quaternary structure, part of the 50S ribosomal subunit.

Its subcellular location is the plastid. The protein localises to the chloroplast. Binds to 23S rRNA. The polypeptide is Large ribosomal subunit protein uL23c (rpl23) (Chaetosphaeridium globosum (Charophycean green alga)).